Consider the following 209-residue polypeptide: RNA chaperone ProQ (209 aa).

A disordered region spans residues Leu-101–Thr-155. Positions Arg-111 to Ala-125 are enriched in basic and acidic residues. Residues Gln-136–Lys-148 are compositionally biased toward basic residues.

This sequence belongs to the ProQ family.

The protein localises to the cytoplasm. Its function is as follows. RNA chaperone with significant RNA binding, RNA strand exchange and RNA duplexing activities. The polypeptide is RNA chaperone ProQ (Vibrio parahaemolyticus serotype O3:K6 (strain RIMD 2210633)).